The following is a 296-amino-acid chain: Coiled-coil domain-containing protein 69 (296 aa).

Residues 1–18 show a composition bias toward basic residues; sequence MGCRHSRLSSCKPPKKKR. A disordered region spans residues 1–41; that stretch reads MGCRHSRLSSCKPPKKKRQEPEPEQPPRPEPHELGPLNGDT. Glycine 2 is lipidated: N-myristoyl glycine. Positions 19–33 are enriched in basic and acidic residues; sequence QEPEPEQPPRPEPHE. A coiled-coil region spans residues 48 to 272; the sequence is CASEEAERHQ…QEKEELLYRV (225 aa). 2 positions are modified to phosphoserine: serine 154 and serine 241.

The protein belongs to the CCDC69 family. In terms of tissue distribution, highly expressed in duodenum, esophagus, pancreas, prostate, salivary gland, thymus and urinary bladder.

Its subcellular location is the cytoplasm. The protein resides in the cytoskeleton. It is found in the spindle. The protein localises to the midbody. In terms of biological role, may act as a scaffold to regulate the recruitment and assembly of spindle midzone components. Required for the localization of AURKB and PLK1 to the spindle midzone. This Homo sapiens (Human) protein is Coiled-coil domain-containing protein 69.